Here is a 263-residue protein sequence, read N- to C-terminus: UPF0328 protein ECU08_2060 (263 aa).

Belongs to the UPF0328 family.

In Encephalitozoon cuniculi (strain GB-M1) (Microsporidian parasite), this protein is UPF0328 protein ECU08_2060.